A 619-amino-acid chain; its full sequence is Isocitrate dehydrogenase kinase/phosphatase (619 aa).

Residues 354–360 and Lys375 each bind ATP; that span reads APGIRGM. Residue Asp409 is part of the active site.

It belongs to the AceK family.

It is found in the cytoplasm. It catalyses the reaction L-seryl-[isocitrate dehydrogenase] + ATP = O-phospho-L-seryl-[isocitrate dehydrogenase] + ADP + H(+). Its function is as follows. Bifunctional enzyme which can phosphorylate or dephosphorylate isocitrate dehydrogenase (IDH) on a specific serine residue. This is a regulatory mechanism which enables bacteria to bypass the Krebs cycle via the glyoxylate shunt in response to the source of carbon. When bacteria are grown on glucose, IDH is fully active and unphosphorylated, but when grown on acetate or ethanol, the activity of IDH declines drastically concomitant with its phosphorylation. This is Isocitrate dehydrogenase kinase/phosphatase from Bordetella bronchiseptica (strain ATCC BAA-588 / NCTC 13252 / RB50) (Alcaligenes bronchisepticus).